Here is a 309-residue protein sequence, read N- to C-terminus: tRNA N6-adenosine threonylcarbamoyltransferase (309 aa).

Positions 108 and 112 each coordinate Fe cation. Residues 130 to 134, aspartate 163, glycine 176, aspartate 180, and asparagine 269 contribute to the substrate site; that span reads LVSGG. Fe cation is bound at residue aspartate 293.

Belongs to the KAE1 / TsaD family. The cofactor is Fe(2+).

The protein resides in the cytoplasm. It catalyses the reaction L-threonylcarbamoyladenylate + adenosine(37) in tRNA = N(6)-L-threonylcarbamoyladenosine(37) in tRNA + AMP + H(+). Its function is as follows. Required for the formation of a threonylcarbamoyl group on adenosine at position 37 (t(6)A37) in tRNAs that read codons beginning with adenine. Is involved in the transfer of the threonylcarbamoyl moiety of threonylcarbamoyl-AMP (TC-AMP) to the N6 group of A37, together with TsaE and TsaB. TsaD likely plays a direct catalytic role in this reaction. This Mycoplasmopsis agalactiae (strain NCTC 10123 / CIP 59.7 / PG2) (Mycoplasma agalactiae) protein is tRNA N6-adenosine threonylcarbamoyltransferase.